Consider the following 510-residue polypeptide: Light-independent protochlorophyllide reductase subunit B (510 aa).

D36 lines the [4Fe-4S] cluster pocket. The active-site Proton donor is D296. 431 to 432 (GM) is a binding site for substrate.

It belongs to the ChlB/BchB/BchZ family. As to quaternary structure, protochlorophyllide reductase is composed of three subunits; ChlL, ChlN and ChlB. Forms a heterotetramer of two ChlB and two ChlN subunits. The cofactor is [4Fe-4S] cluster.

It is found in the plastid. The protein resides in the chloroplast. It catalyses the reaction chlorophyllide a + oxidized 2[4Fe-4S]-[ferredoxin] + 2 ADP + 2 phosphate = protochlorophyllide a + reduced 2[4Fe-4S]-[ferredoxin] + 2 ATP + 2 H2O. It functions in the pathway porphyrin-containing compound metabolism; chlorophyll biosynthesis (light-independent). Component of the dark-operative protochlorophyllide reductase (DPOR) that uses Mg-ATP and reduced ferredoxin to reduce ring D of protochlorophyllide (Pchlide) to form chlorophyllide a (Chlide). This reaction is light-independent. The NB-protein (ChlN-ChlB) is the catalytic component of the complex. The polypeptide is Light-independent protochlorophyllide reductase subunit B (Angiopteris evecta (Mule's foot fern)).